The chain runs to 437 residues: GTPase Obg (437 aa).

The region spanning 2–160 (SMFLDTAKIS…RQLELELKIL (159 aa)) is the Obg domain. One can recognise an OBG-type G domain in the interval 161–338 (ADVGLVGFPS…LLEATAELLA (178 aa)). Residues 167-174 (GFPSVGKS), 192-196 (FTTIV), 214-217 (DLPG), 284-287 (NKMD), and 319-321 (SSL) contribute to the GTP site. Positions 174 and 194 each coordinate Mg(2+). The region spanning 359–437 (GFAEAEKEFE…IGKFEFEFVD (79 aa)) is the OCT domain.

The protein belongs to the TRAFAC class OBG-HflX-like GTPase superfamily. OBG GTPase family. As to quaternary structure, monomer. It depends on Mg(2+) as a cofactor.

Its subcellular location is the cytoplasm. Functionally, an essential GTPase which binds GTP, GDP and possibly (p)ppGpp with moderate affinity, with high nucleotide exchange rates and a fairly low GTP hydrolysis rate. Plays a role in control of the cell cycle, stress response, ribosome biogenesis and in those bacteria that undergo differentiation, in morphogenesis control. This is GTPase Obg from Streptococcus pyogenes serotype M3 (strain ATCC BAA-595 / MGAS315).